We begin with the raw amino-acid sequence, 67 residues long: Large ribosomal subunit protein bL35 (67 aa).

It belongs to the bacterial ribosomal protein bL35 family.

The protein is Large ribosomal subunit protein bL35 of Caldanaerobacter subterraneus subsp. tengcongensis (strain DSM 15242 / JCM 11007 / NBRC 100824 / MB4) (Thermoanaerobacter tengcongensis).